A 301-amino-acid chain; its full sequence is Acetyl-coenzyme A carboxylase carboxyl transferase subunit beta (301 aa).

In terms of domain architecture, CoA carboxyltransferase N-terminal spans 25 to 294; the sequence is LWIKDPSTGE…NSDAPAPQKP (270 aa).

This sequence belongs to the AccD/PCCB family. Acetyl-CoA carboxylase is a heterohexamer composed of biotin carboxyl carrier protein (AccB), biotin carboxylase (AccC) and two subunits each of ACCase subunit alpha (AccA) and ACCase subunit beta (AccD).

It localises to the cytoplasm. The enzyme catalyses N(6)-carboxybiotinyl-L-lysyl-[protein] + acetyl-CoA = N(6)-biotinyl-L-lysyl-[protein] + malonyl-CoA. It functions in the pathway lipid metabolism; malonyl-CoA biosynthesis; malonyl-CoA from acetyl-CoA: step 1/1. Functionally, component of the acetyl coenzyme A carboxylase (ACC) complex. Biotin carboxylase (BC) catalyzes the carboxylation of biotin on its carrier protein (BCCP) and then the CO(2) group is transferred by the transcarboxylase to acetyl-CoA to form malonyl-CoA. The chain is Acetyl-coenzyme A carboxylase carboxyl transferase subunit beta from Brucella canis (strain ATCC 23365 / NCTC 10854 / RM-666).